Consider the following 21-residue polypeptide: Putative sperm adenylate cyclase (21 aa).

The catalysed reaction is ATP = 3',5'-cyclic AMP + diphosphate. This chain is Putative sperm adenylate cyclase, found in Mus musculus (Mouse).